Consider the following 1037-residue polypeptide: Multidrug resistance protein MdtF (1037 aa).

At 1 to 9 (MANYFIDRP) the chain is on the cytoplasmic side. A helical transmembrane segment spans residues 10-30 (VFAWVLAIIMMLAGGLAIMNL). Topologically, residues 31-338 (PVAQYPQIAP…TTPFIKISIQ (308 aa)) are periplasmic. A helical membrane pass occupies residues 339–359 (EVFKTLVEAIILVFLVMYLFL). The Cytoplasmic portion of the chain corresponds to 360–369 (QNFRATIIPT). A helical transmembrane segment spans residues 370 to 390 (IAVPVVILGTFAILSAVGFTI). The Periplasmic segment spans residues 391-392 (NT). A helical membrane pass occupies residues 393 to 413 (LTMFGMVLAIGLLVDDAIVVV). Residues 414–440 (ENVERVIAEDKLPPKEATHKSMGQIQR) lie on the Cytoplasmic side of the membrane. A helical membrane pass occupies residues 441–461 (ALVGIAVVLSAVFMPMAFMSG). At 462–471 (ATGEIYRQFS) the chain is on the periplasmic side. A helical transmembrane segment spans residues 472–492 (ITLISSMLLSVFVAMSLTPAL). The Cytoplasmic segment spans residues 493–534 (CATILKAAPEGGHKPNALFARFNTLFEKSTQHYTDSTRSLLR). Residues 535–555 (CTGRYMVVYLLICAGMAVLFL) traverse the membrane as a helical segment. Over 556–870 (RTPTSFLPEE…SYQEALSSNQ (315 aa)) the chain is Periplasmic. A helical transmembrane segment spans residues 871–891 (APALYAISLVVVFLALAALYE). A topological domain (cytoplasmic) is located at residue serine 892. A helical membrane pass occupies residues 893–913 (WSIPFSVMLVVPLGVVGALLA). Over 914 to 927 (TDLRGLSNDVYFQV) the chain is Periplasmic. Residues 928–948 (GLLTTIGLSAKNAILIVEFAV) form a helical membrane-spanning segment. Residues 949 to 972 (EMMQKEGKTPVEAIIEAARMRLRP) are Cytoplasmic-facing. The helical transmembrane segment at 973–993 (ILMTSLAFILGVLPLVISHGA) threads the bilayer. The Periplasmic segment spans residues 994–1006 (GSGAQNAVGTGVM). Residues 1007–1027 (GGMFAATVLAIYFVPVFFVVV) traverse the membrane as a helical segment. The Cytoplasmic segment spans residues 1028–1037 (EHLFARFKKA).

It belongs to the resistance-nodulation-cell division (RND) (TC 2.A.6) family. Homotrimer. Part of the tripartite efflux system MdtEF-TolC, which is composed of an inner membrane transporter, MdtF, a membrane fusion protein, MdtE, and an outer membrane component, TolC. The complex forms a large protein conduit and can translocate molecules across both the inner and outer membranes.

The protein localises to the cell inner membrane. Its function is as follows. Part of the tripartite efflux system MdtEF-TolC, which confers resistance to various compounds. This Escherichia coli O6:H1 (strain CFT073 / ATCC 700928 / UPEC) protein is Multidrug resistance protein MdtF (mdtF).